We begin with the raw amino-acid sequence, 259 residues long: MTDNNDTWTVAGRTFTSRLIVGTGKYKDFEQNAAAVEASGAEIVTVAVRRVNVSDPKAPMLTDYIDPKKITYLPNTAGCFTAEDAIRTLRLAREAGGWDLVKLEVLGEARTLYPNMIETIRATEVLAKEGFLPMVYCVDDPIAAKQLEDAGAVAVMPLGAPIGSGLGIQNKVTVRLIVEGAKVPVLVDAGVGTASEAAVAMELGCDGVLMNTAIAEAKDPIRMARAMKLAVQAGRDAYLAGRMPTRKYADPSSPLAGLI.

Catalysis depends on K102, which acts as the Schiff-base intermediate with DXP. 1-deoxy-D-xylulose 5-phosphate-binding positions include G163, 189-190, and 211-212; these read AG and NT.

Belongs to the ThiG family. In terms of assembly, homotetramer. Forms heterodimers with either ThiH or ThiS.

It is found in the cytoplasm. The catalysed reaction is [ThiS sulfur-carrier protein]-C-terminal-Gly-aminoethanethioate + 2-iminoacetate + 1-deoxy-D-xylulose 5-phosphate = [ThiS sulfur-carrier protein]-C-terminal Gly-Gly + 2-[(2R,5Z)-2-carboxy-4-methylthiazol-5(2H)-ylidene]ethyl phosphate + 2 H2O + H(+). The protein operates within cofactor biosynthesis; thiamine diphosphate biosynthesis. Catalyzes the rearrangement of 1-deoxy-D-xylulose 5-phosphate (DXP) to produce the thiazole phosphate moiety of thiamine. Sulfur is provided by the thiocarboxylate moiety of the carrier protein ThiS. In vitro, sulfur can be provided by H(2)S. This is Thiazole synthase from Novosphingobium aromaticivorans (strain ATCC 700278 / DSM 12444 / CCUG 56034 / CIP 105152 / NBRC 16084 / F199).